The sequence spans 200 residues: Membrane-spanning 4-domains subfamily A member 5 (200 aa).

At 1 to 52 the chain is on the cytoplasmic side; it reads MDSSTAHSPVFLVFPPEITASEYESTELSATTFSTQSPLQKLFARKMKILGT. A helical transmembrane segment spans residues 53–73; sequence IQILFGIMTFSFGVIFLFTLL. The Extracellular portion of the chain corresponds to 74-80; sequence KPYPRFP. Residues 81–101 form a helical membrane-spanning segment; that stretch reads FIFLSGYPFWGSVLFINSGAF. Topologically, residues 102-120 are cytoplasmic; sequence LIAVKRKTTETLIILSRIM. A helical transmembrane segment spans residues 121–141; that stretch reads NFLSALGAIAGIILLTFGFIL. Residues 142–159 are Extracellular-facing; it reads DQNYICGYSHQNSQCKAV. A helical transmembrane segment spans residues 160–180; sequence TVLFLGILITLMTFSIIELFI. Residues 181-200 lie on the Cytoplasmic side of the membrane; sequence SLPFSILGCHSEDCDCEQCC.

The protein belongs to the MS4A family. As to expression, expressed at high level in the testis. Detected also in the pancreas, heart and in the brain.

It is found in the membrane. May be involved in signal transduction as a component of a multimeric receptor complex. The protein is Membrane-spanning 4-domains subfamily A member 5 (MS4A5) of Homo sapiens (Human).